The following is a 118-amino-acid chain: Large ribosomal subunit protein uL18 (118 aa).

The segment at 1 to 24 (MISKPDKNKTRQRRHARVRGKISG) is disordered. Residues 10–20 (TRQRRHARVRG) are compositionally biased toward basic residues.

It belongs to the universal ribosomal protein uL18 family. As to quaternary structure, part of the 50S ribosomal subunit; part of the 5S rRNA/L5/L18/L25 subcomplex. Contacts the 5S and 23S rRNAs.

Functionally, this is one of the proteins that bind and probably mediate the attachment of the 5S RNA into the large ribosomal subunit, where it forms part of the central protuberance. This chain is Large ribosomal subunit protein uL18, found in Lactiplantibacillus plantarum (strain ATCC BAA-793 / NCIMB 8826 / WCFS1) (Lactobacillus plantarum).